A 287-amino-acid polypeptide reads, in one-letter code: Iron-sulfur cluster carrier protein (287 aa).

47 to 54 is a binding site for ATP; it reads GKGGVGKS.

It belongs to the Mrp/NBP35 ATP-binding proteins family. As to quaternary structure, homodimer.

In terms of biological role, binds and transfers iron-sulfur (Fe-S) clusters to target apoproteins. Can hydrolyze ATP. The protein is Iron-sulfur cluster carrier protein of Pseudomonas fragi.